The sequence spans 345 residues: uncharacterized protein (345 aa).

The tract at residues 1 to 98 (MNDEMKGKSG…ISGKSFIDPE (98 aa)) is disordered. Composition is skewed to basic and acidic residues over residues 18 to 27 (RSDDDSDKRT), 42 to 68 (SRADGGRRPARDDKQSQPRDRKWEDSP), and 76 to 86 (PGDETPEKADH).

It belongs to the class IV-like SAM-binding methyltransferase superfamily. RNA methyltransferase TrmH family.

This is an uncharacterized protein from Escherichia coli O157:H7.